The chain runs to 890 residues: Translation initiation factor IF-2 (890 aa).

The tract at residues Leu-45 to Gln-304 is disordered. A compositionally biased stretch (polar residues) spans Ser-67–Val-81. The span at Val-92–Asp-217 shows a compositional bias: basic and acidic residues. Basic residues predominate over residues Gly-252–Asn-266. Over residues Lys-267 to Ala-280 the composition is skewed to basic and acidic residues. In terms of domain architecture, tr-type G spans Pro-389 to Lys-558. The tract at residues Gly-398–Thr-405 is G1. Gly-398–Thr-405 is a binding site for GTP. The G2 stretch occupies residues Gly-423–His-427. The G3 stretch occupies residues Asp-444 to Gly-447. GTP contacts are provided by residues Asp-444 to His-448 and Asn-498 to Asp-501. Residues Asn-498–Asp-501 form a G4 region. The tract at residues Ser-534 to Lys-536 is G5. Lys-808 is modified (N6-acetyllysine).

This sequence belongs to the TRAFAC class translation factor GTPase superfamily. Classic translation factor GTPase family. IF-2 subfamily.

The protein resides in the cytoplasm. One of the essential components for the initiation of protein synthesis. Protects formylmethionyl-tRNA from spontaneous hydrolysis and promotes its binding to the 30S ribosomal subunits. Also involved in the hydrolysis of GTP during the formation of the 70S ribosomal complex. The protein is Translation initiation factor IF-2 of Shigella sonnei (strain Ss046).